Consider the following 149-residue polypeptide: 17 kDa major membrane protein (149 aa).

An N-terminal signal peptide occupies residues 1-19; that stretch reads MKKIIKLSLLSLSIAGLAS. Residue cysteine 20 is the site of N-palmitoyl cysteine attachment. The S-diacylglycerol cysteine moiety is linked to residue cysteine 20.

It is found in the cell outer membrane. The polypeptide is 17 kDa major membrane protein (Francisella tularensis subsp. holarctica (strain LVS)).